Reading from the N-terminus, the 380-residue chain is Queuine tRNA-ribosyltransferase (380 aa).

Aspartate 95 acts as the Proton acceptor in catalysis. Substrate-binding positions include 95 to 99 (DSGGF), aspartate 149, glutamine 192, and glycine 219. The tract at residues 250–256 (GVGSPDA) is RNA binding. The active-site Nucleophile is the aspartate 269. An RNA binding; important for wobble base 34 recognition region spans residues 274-278 (TRIAR). Residues cysteine 307, cysteine 309, cysteine 312, and histidine 338 each contribute to the Zn(2+) site.

The protein belongs to the queuine tRNA-ribosyltransferase family. In terms of assembly, homodimer. Within each dimer, one monomer is responsible for RNA recognition and catalysis, while the other monomer binds to the replacement base PreQ1. The cofactor is Zn(2+).

The enzyme catalyses 7-aminomethyl-7-carbaguanine + guanosine(34) in tRNA = 7-aminomethyl-7-carbaguanosine(34) in tRNA + guanine. The protein operates within tRNA modification; tRNA-queuosine biosynthesis. Catalyzes the base-exchange of a guanine (G) residue with the queuine precursor 7-aminomethyl-7-deazaguanine (PreQ1) at position 34 (anticodon wobble position) in tRNAs with GU(N) anticodons (tRNA-Asp, -Asn, -His and -Tyr). Catalysis occurs through a double-displacement mechanism. The nucleophile active site attacks the C1' of nucleotide 34 to detach the guanine base from the RNA, forming a covalent enzyme-RNA intermediate. The proton acceptor active site deprotonates the incoming PreQ1, allowing a nucleophilic attack on the C1' of the ribose to form the product. After dissociation, two additional enzymatic reactions on the tRNA convert PreQ1 to queuine (Q), resulting in the hypermodified nucleoside queuosine (7-(((4,5-cis-dihydroxy-2-cyclopenten-1-yl)amino)methyl)-7-deazaguanosine). This chain is Queuine tRNA-ribosyltransferase, found in Pediococcus pentosaceus (strain ATCC 25745 / CCUG 21536 / LMG 10740 / 183-1w).